A 381-amino-acid chain; its full sequence is Creatine kinase M-type (381 aa).

Residues 11–98 (KLNYSAAEEF…FDPVIEDRHG (88 aa)) form the Phosphagen kinase N-terminal domain. In terms of domain architecture, Phosphagen kinase C-terminal spans 125 to 367 (YVLSSRVRTG…KLMVEMEKRL (243 aa)). Residues 128 to 132 (SSRVR), His-191, Arg-236, Arg-292, 320 to 325 (RGTGGV), and Asp-335 contribute to the ATP site.

The protein belongs to the ATP:guanido phosphotransferase family. In terms of assembly, dimer of identical or non-identical chains. With MM being the major form in skeletal muscle and myocardium, MB existing in myocardium, and BB existing in many tissues, especially brain.

The protein localises to the cytoplasm. It carries out the reaction creatine + ATP = N-phosphocreatine + ADP + H(+). Its function is as follows. Reversibly catalyzes the transfer of phosphate between ATP and various phosphogens (e.g. creatine phosphate). Creatine kinase isoenzymes play a central role in energy transduction in tissues with large, fluctuating energy demands, such as skeletal muscle, heart, brain and spermatozoa. This is Creatine kinase M-type from Tetronarce californica (Pacific electric ray).